Consider the following 604-residue polypeptide: Elongation factor 4 (604 aa).

The region spanning 10–191 (KNIRNFSIIA…KIITTIPAPS (182 aa)) is the tr-type G domain. Residues 22 to 27 (DHGKST) and 138 to 141 (NKID) each bind GTP.

Belongs to the TRAFAC class translation factor GTPase superfamily. Classic translation factor GTPase family. LepA subfamily.

The protein resides in the cell inner membrane. The catalysed reaction is GTP + H2O = GDP + phosphate + H(+). Its function is as follows. Required for accurate and efficient protein synthesis under certain stress conditions. May act as a fidelity factor of the translation reaction, by catalyzing a one-codon backward translocation of tRNAs on improperly translocated ribosomes. Back-translocation proceeds from a post-translocation (POST) complex to a pre-translocation (PRE) complex, thus giving elongation factor G a second chance to translocate the tRNAs correctly. Binds to ribosomes in a GTP-dependent manner. The sequence is that of Elongation factor 4 from Helicobacter pylori (strain J99 / ATCC 700824) (Campylobacter pylori J99).